Consider the following 960-residue polypeptide: RNA polymerase II subunit A C-terminal domain phosphatase (960 aa).

Methionine 1 carries the post-translational modification N-acetylmethionine. The FCP1 homology domain occupies 178–341 (HRNRKLVLMV…PPAARETQAR (164 aa)). The segment at 331–580 (APPAARETQA…EEDTDDDDHL (250 aa)) is disordered. A compositionally biased stretch (polar residues) spans 439-448 (PGVQPTQGDA). Residues 453-463 (LDFDLSSDSES) are compositionally biased toward acidic residues. Serine 530 bears the Phosphoserine mark. Over residues 547-556 (ESQNSEQSGV) the composition is skewed to polar residues. A compositionally biased stretch (acidic residues) spans 566-578 (VGEEEEEDTDDDD). Positions 619–718 (LKSKVLADVA…DKVEEQLFPL (100 aa)) constitute a BRCT domain. Serine 664 and serine 730 each carry phosphoserine. Lysine 770 is modified (N6-acetyllysine). 2 disordered regions span residues 770-834 (KLIR…MSEA) and 854-948 (DILG…ADEM). Phosphoserine is present on residues serine 830, serine 860, and serine 863. Positions 854-864 (DILGEGSDDSD) are enriched in acidic residues. The span at 865 to 881 (IEKKKPEDQDNEQERAP) shows a compositional bias: basic and acidic residues. Acidic residues predominate over residues 934-947 (SNDDEEGSSSEADE).

As to quaternary structure, homodimer. Interacts with GTF2F1. Interacts with WDR77, SNRPB and SNRNP70. Post-translationally, phosphorylated. In the presence of TFIIF, the phosphorylated form has an increased CTD phosphatase activity. The phosphorylation is required for the physical interaction with GTF2F1.

The protein resides in the nucleus. The protein localises to the cytoplasm. Its subcellular location is the cytoskeleton. It is found in the microtubule organizing center. It localises to the centrosome. The protein resides in the spindle. The protein localises to the spindle pole. Its subcellular location is the midbody. The catalysed reaction is O-phospho-L-seryl-[protein] + H2O = L-seryl-[protein] + phosphate. The enzyme catalyses O-phospho-L-threonyl-[protein] + H2O = L-threonyl-[protein] + phosphate. Processively dephosphorylates 'Ser-2' and 'Ser-5' of the heptad repeats YSPTSPS in the C-terminal domain of the largest RNA polymerase II subunit. This promotes the activity of RNA polymerase II. Plays a role in the exit from mitosis by dephosphorylating crucial mitotic substrates (USP44, CDC20 and WEE1) that are required for M-phase-promoting factor (MPF)/CDK1 inactivation. This Mus musculus (Mouse) protein is RNA polymerase II subunit A C-terminal domain phosphatase (Ctdp1).